Consider the following 272-residue polypeptide: Arylesterase (272 aa).

One can recognise an AB hydrolase-1 domain in the interval 21–253 (KPVLFSHGWL…LKVYKDAPHG (233 aa)). Residue Trp-29 participates in acetate binding. Ser-95 is a catalytic residue. Met-96 contributes to the acetate binding site. Active-site residues include Asp-223 and His-252.

This sequence belongs to the AB hydrolase superfamily. Bacterial non-heme haloperoxidase / perhydrolase family. As to quaternary structure, dimer of trimers.

It catalyses the reaction a phenyl acetate + H2O = a phenol + acetate + H(+). The enzyme catalyses peracetic acid + H2O = acetate + H2O2 + H(+). The catalysed reaction is a percarboxylic acid + H2O = a carboxylate + H2O2 + H(+). Its function is as follows. Hydrolyzes phenolic esters, such as phenyl acetate, nitrophenyl acetate and naphtyl acetate. Can act on a wide range of esters, but reaction rate and enantioselectivity differ significantly depending on the substrate. Shows a preference for esters with small acyl groups. Also shows low perhydrolase activity, and catalyzes the reversible formation of peroxycarboxylic acids from carboxylic acids and hydrogen peroxide. In vitro, enzyme-generated peracetic acid oxidizes bromide ion to bromonium, which reacts with monochlorodimedone to form bromochlorodimedone. The polypeptide is Arylesterase (Pseudomonas fluorescens).